A 342-amino-acid chain; its full sequence is MAVRVAVAGASGYAGGEALRLLLAHPEVEIGALTGNSNAGQKLGALQPHLLPLADRVLQETSPDVLAGHDVVFLALPHGQSAAVAEQLGPDVLVVDMGADFRLRNPADWEKFYGSPHAGTWPYGLPELPGGRAALEGSKRIAVPGCYPTAVSLALFPAYAAALAEPEAVIVAASGTSGAGKAAKPHLLGSEVMGSMSPYGVGGVHRHTPEMIQNLGAAAGEPVSVSFTPTLAPMPRGILATCTAKARAGVTAESVRAAYEKAFADEPFVHLLPEGQWPATASVYGSNAVQVQVAYDAAAQRIIAISAIDNLTKGTAGGALQSMNIALGLPEELGLSTIGVAP.

The active site involves Cys146.

The protein belongs to the NAGSA dehydrogenase family. Type 1 subfamily.

It is found in the cytoplasm. The enzyme catalyses N-acetyl-L-glutamate 5-semialdehyde + phosphate + NADP(+) = N-acetyl-L-glutamyl 5-phosphate + NADPH + H(+). It participates in amino-acid biosynthesis; L-arginine biosynthesis; N(2)-acetyl-L-ornithine from L-glutamate: step 3/4. Its function is as follows. Catalyzes the NADPH-dependent reduction of N-acetyl-5-glutamyl phosphate to yield N-acetyl-L-glutamate 5-semialdehyde. The chain is N-acetyl-gamma-glutamyl-phosphate reductase from Streptomyces avermitilis (strain ATCC 31267 / DSM 46492 / JCM 5070 / NBRC 14893 / NCIMB 12804 / NRRL 8165 / MA-4680).